The primary structure comprises 227 residues: Peroxiredoxin 1 (227 aa).

The 156-residue stretch at 6–161 (PLIGEKFPEM…ILRLIKSLQM (156 aa)) folds into the Thioredoxin domain. Cys-48 serves as the catalytic Cysteine sulfenic acid (-SOH) intermediate. Arg-124 lines the substrate pocket.

Belongs to the peroxiredoxin family. Prx6 subfamily. Homodecamer. Pentamer of dimers that assemble into a ring structure.

It is found in the cytoplasm. The enzyme catalyses a hydroperoxide + [thioredoxin]-dithiol = an alcohol + [thioredoxin]-disulfide + H2O. Its function is as follows. Thiol-specific peroxidase that catalyzes the reduction of hydrogen peroxide and organic hydroperoxides to water and alcohols, respectively. Plays a role in cell protection against oxidative stress by detoxifying peroxides. This chain is Peroxiredoxin 1, found in Picrophilus torridus (strain ATCC 700027 / DSM 9790 / JCM 10055 / NBRC 100828 / KAW 2/3).